We begin with the raw amino-acid sequence, 396 residues long: Purine ribonucleoside efflux pump NepI (396 aa).

At 1–21 the chain is on the cytoplasmic side; it reads MSEFIAENRGADAITRPNWSA. A helical transmembrane segment spans residues 22–42; the sequence is VFSVAFCVACLIIVEFLPVSL. The Periplasmic portion of the chain corresponds to 43–54; the sequence is LTPMAQDLGISE. Residues 55–75 traverse the membrane as a helical segment; it reads GVAGQSVTVTAFVAMFASLFI. Over 76-85 the chain is Cytoplasmic; it reads TQTIQATDRR. Residues 86–106 traverse the membrane as a helical segment; it reads YVVILFAVLLTLSCLLVSFAN. A topological domain (periplasmic) is located at residue serine 107. The chain crosses the membrane as a helical span at residues 108–128; that stretch reads FSLLLIGRACLGLALGGFWAM. Residues 129–147 lie on the Cytoplasmic side of the membrane; it reads SASLTMRLVPPRTVPKALS. The chain crosses the membrane as a helical span at residues 148 to 168; it reads VIFGAVSIALVIAAPLGSFLG. Residues 169-175 lie on the Periplasmic side of the membrane; that stretch reads ELIGWRN. Residues 176–196 form a helical membrane-spanning segment; that stretch reads VFNAAAAMGVLCIFWIIKSLP. Topologically, residues 197 to 215 are cytoplasmic; it reads SLPGEPSHQKQNTFRLLQR. The chain crosses the membrane as a helical span at residues 216-236; that stretch reads PGVMAGMIAIFMSFAGQFAFF. The Periplasmic portion of the chain corresponds to 237-255; that stretch reads TYIRPVYMNLAGFGVDGLT. Residues 256-276 traverse the membrane as a helical segment; sequence LVLLSFGIASFVGTSLSSFIL. The Cytoplasmic portion of the chain corresponds to 277-281; it reads KRSVK. The helical transmembrane segment at 282-302 threads the bilayer; the sequence is LALAGAPFVLALSALVLTLWG. At 303–305 the chain is on the periplasmic side; that stretch reads SDK. A helical transmembrane segment spans residues 306–326; it reads IVATGVAIIWGLTFALIPVGW. The Cytoplasmic segment spans residues 327-343; sequence STWITRSLADQAEKAGS. The chain crosses the membrane as a helical span at residues 344–364; the sequence is IQVAVIQLANTCGAAIGGYAL. Residues 365–366 lie on the Periplasmic side of the membrane; that stretch reads DN. Residues 367 to 387 traverse the membrane as a helical segment; the sequence is IGLTSPLMLSGTLMLLTALLV. Topologically, residues 388 to 396 are cytoplasmic; sequence TAKVKMKKS.

This sequence belongs to the major facilitator superfamily. DHA1 family. NepI (TC 2.A.1.2.26) subfamily.

It localises to the cell inner membrane. The catalysed reaction is inosine(in) + H(+)(out) = inosine(out) + H(+)(in). It catalyses the reaction guanosine(in) + H(+)(out) = guanosine(out) + H(+)(in). Functionally, involved in the efflux of purine ribonucleosides, such as inosine and guanosine. This chain is Purine ribonucleoside efflux pump NepI, found in Escherichia coli O1:K1 / APEC.